The primary structure comprises 586 residues: Envelope glycoprotein (586 aa).

Residues methionine 1–alanine 22 form the signal peptide. Over glycine 23 to valine 526 the chain is Extracellular. Residues asparagine 120 and asparagine 237 are each glycosylated (N-linked (GlcNAc...) asparagine; by host). The short motif at cysteine 247–cysteine 250 is the CXXC element. 3 disulfides stabilise this stretch: cysteine 247–cysteine 250, cysteine 247–cysteine 483, and cysteine 475–cysteine 482. 8 N-linked (GlcNAc...) asparagine; by host glycosylation sites follow: asparagine 264, asparagine 276, asparagine 291, asparagine 304, asparagine 318, asparagine 324, asparagine 339, and asparagine 357. The fusion peptide stretch occupies residues leucine 398–leucine 418. 2 coiled-coil regions span residues glycine 419–alanine 469 and glutamine 479–phenylalanine 515. Residues leucine 458 to isoleucine 474 are immunosuppression. The CX6CC signature appears at cysteine 475–cysteine 483. N-linked (GlcNAc...) asparagine; by host glycosylation occurs at asparagine 487. A helical membrane pass occupies residues methionine 527 to phenylalanine 547. At asparagine 548–threonine 586 the chain is on the cytoplasmic side. The YXXL motif; contains endocytosis signal motif lies at tyrosine 570–leucine 573.

As to quaternary structure, the mature envelope protein (Env) consists of a trimer of SU-TM heterodimers attached by a labile interchain disulfide bond. Specific enzymatic cleavages in vivo yield mature proteins. Envelope glycoproteins are synthesized as an inactive precursor that is N-glycosylated and processed likely by host cell furin or by a furin-like protease in the Golgi to yield the mature SU and TM proteins. The cleavage site between SU and TM requires the minimal sequence [KR]-X-[KR]-R. The R-peptide is released from the C-terminus of the cytoplasmic tail of the TM protein upon particle formation as a result of proteolytic cleavage by the viral protease. Cleavage of this peptide is required for TM to become fusogenic. Post-translationally, the CXXC motif is highly conserved across a broad range of retroviral envelope proteins. It is thought to participate in the formation of a labile disulfide bond possibly with the CX6CC motif present in the transmembrane protein. Isomerization of the intersubunit disulfide bond to an SU intrachain disulfide bond is thought to occur upon receptor recognition in order to allow membrane fusion.

Its subcellular location is the virion membrane. The protein localises to the host cell membrane. Functionally, the surface protein (SU) attaches the virus to the host cell by binding to its receptor. This interaction triggers the refolding of the transmembrane protein (TM) and is thought to activate its fusogenic potential by unmasking its fusion peptide. Fusion occurs at the host cell plasma membrane. In terms of biological role, the transmembrane protein (TM) acts as a class I viral fusion protein. Under the current model, the protein has at least 3 conformational states: pre-fusion native state, pre-hairpin intermediate state, and post-fusion hairpin state. During viral and target cell membrane fusion, the coiled coil regions (heptad repeats) assume a trimer-of-hairpins structure, positioning the fusion peptide in close proximity to the C-terminal region of the ectodomain. The formation of this structure appears to drive apposition and subsequent fusion of viral and target cell membranes. Membranes fusion leads to delivery of the nucleocapsid into the cytoplasm. The chain is Envelope glycoprotein (env) from Mason-Pfizer monkey virus (MPMV).